The primary structure comprises 133 residues: Transcription antitermination protein NusB (133 aa).

Belongs to the NusB family.

In terms of biological role, involved in transcription antitermination. Required for transcription of ribosomal RNA (rRNA) genes. Binds specifically to the boxA antiterminator sequence of the ribosomal RNA (rrn) operons. The protein is Transcription antitermination protein NusB of Shewanella denitrificans (strain OS217 / ATCC BAA-1090 / DSM 15013).